The primary structure comprises 464 residues: tRNA modification GTPase MnmE (464 aa).

(6S)-5-formyl-5,6,7,8-tetrahydrofolate is bound by residues Arg-25, Glu-87, and Lys-130. The region spanning 226-386 is the TrmE-type G domain; the sequence is GLSVVLAGQP…LREELLRIAG (161 aa). A K(+)-binding site is contributed by Asn-236. Residues 236-241, 255-261, and 280-283 each bind GTP; these read NVGKSS, TPIAGTT, and DTAG. Ser-240 lines the Mg(2+) pocket. Positions 255, 257, and 260 each coordinate K(+). Thr-261 contributes to the Mg(2+) binding site. Lys-464 contacts (6S)-5-formyl-5,6,7,8-tetrahydrofolate.

This sequence belongs to the TRAFAC class TrmE-Era-EngA-EngB-Septin-like GTPase superfamily. TrmE GTPase family. In terms of assembly, homodimer. Heterotetramer of two MnmE and two MnmG subunits. The cofactor is K(+).

The protein resides in the cytoplasm. Functionally, exhibits a very high intrinsic GTPase hydrolysis rate. Involved in the addition of a carboxymethylaminomethyl (cmnm) group at the wobble position (U34) of certain tRNAs, forming tRNA-cmnm(5)s(2)U34. The polypeptide is tRNA modification GTPase MnmE (Paraburkholderia xenovorans (strain LB400)).